Here is a 217-residue protein sequence, read N- to C-terminus: Ribonuclease HII (217 aa).

One can recognise an RNase H type-2 domain in the interval 34–217 (WPVAGTDEAG…RMSFRPLKRD (184 aa)). 3 residues coordinate a divalent metal cation: Asp40, Glu41, and Asp131.

It belongs to the RNase HII family. Mn(2+) is required as a cofactor. Requires Mg(2+) as cofactor.

It is found in the cytoplasm. It carries out the reaction Endonucleolytic cleavage to 5'-phosphomonoester.. Its function is as follows. Endonuclease that specifically degrades the RNA of RNA-DNA hybrids. The sequence is that of Ribonuclease HII from Agrobacterium fabrum (strain C58 / ATCC 33970) (Agrobacterium tumefaciens (strain C58)).